Reading from the N-terminus, the 1242-residue chain is ATP-dependent RNA helicase DHX8 (1242 aa).

Disordered stretches follow at residues 75-283 (RPSR…DDPE) and 354-449 (SMKE…GLLP). Basic and acidic residues-rich tracts occupy residues 87–97 (TVGDKKEDKKS), 113–141 (YSKKEESDDDEKVKAKPEKHSETHKKTDM), and 180–196 (RDRDTKRRSRSREDRHS). Basic residues-rich tracts occupy residues 197 to 222 (DRRRSRSRDKERRRRSRSRDNRRRSR) and 232 to 252 (DRRHKSSSSRDHHERRRRSRS). The span at 253–269 (RSTERRDRRDRSRDCSE) shows a compositional bias: basic and acidic residues. Residues 285-356 (GKIYSGKIAN…TGQKVSLSMK (72 aa)) form the S1 motif domain. The span at 388 to 399 (FSSSTSMLNLQG) shows a compositional bias: polar residues. Positions 439-449 (PDFDEETGLLP) are enriched in acidic residues. A Helicase ATP-binding domain is found at 596–759 (IKAVTDNQIL…FFKAPIFTIP (164 aa)). ATP is bound at residue 609 to 616 (GETGSGKT). The DEAH box motif lies at 706 to 709 (DEAH). The 181-residue stretch at 777–957 (YLDASLITVM…TTVLQLKTMG (181 aa)) folds into the Helicase C-terminal domain.

This sequence belongs to the DEAD box helicase family. DEAH subfamily. DDX8/PRP22 sub-subfamily. Identified in the spliceosome C complex.

The protein resides in the nucleus. The catalysed reaction is ATP + H2O = ADP + phosphate + H(+). Functionally, involved in pre-mRNA splicing as component of the spliceosome. Facilitates nuclear export of spliced mRNA by releasing the RNA from the spliceosome. Before and after egg-chamber formation, required for nurse-cell chromatin dispersal (NCCD) probably by playing a role in spliceosome localization to chromatin/interchromatin spaces. The polypeptide is ATP-dependent RNA helicase DHX8 (Drosophila melanogaster (Fruit fly)).